The sequence spans 686 residues: Eukaryotic translation initiation factor 3 subunit B (686 aa).

Residues methionine 1–aspartate 29 form a disordered region. Residues asparagine 11–phenylalanine 21 show a composition bias toward acidic residues. The RRM domain occupies serine 53–aspartate 137. WD repeat units follow at residues threonine 203–lysine 242, aspartate 289–leucine 327, isoleucine 330–glutamate 365, glutamate 438–leucine 480, and proline 526–threonine 571. A coiled-coil region spans residues alanine 590 to isoleucine 642.

It belongs to the eIF-3 subunit B family. In terms of assembly, component of the eukaryotic translation initiation factor 3 (eIF-3) complex. The eIF-3 complex interacts with pix. Interacts with mxt.

Its subcellular location is the cytoplasm. Its function is as follows. RNA-binding component of the eukaryotic translation initiation factor 3 (eIF-3) complex, which is involved in protein synthesis of a specialized repertoire of mRNAs and, together with other initiation factors, stimulates binding of mRNA and methionyl-tRNAi to the 40S ribosome. The eIF-3 complex specifically targets and initiates translation of a subset of mRNAs involved in cell proliferation. The protein is Eukaryotic translation initiation factor 3 subunit B of Drosophila ananassae (Fruit fly).